Here is a 345-residue protein sequence, read N- to C-terminus: Dihydroorotate dehydrogenase (quinone) (345 aa).

Residues 65–69 (AGLDK) and Thr-89 contribute to the FMN site. Substrate is bound at residue Lys-69. Position 114 to 118 (114 to 118 (NRMGF)) interacts with substrate. The FMN site is built by Asn-142 and Asn-175. Position 175 (Asn-175) interacts with substrate. Ser-178 functions as the Nucleophile in the catalytic mechanism. Asn-180 lines the substrate pocket. Residues Lys-220 and Thr-248 each contribute to the FMN site. 249-250 (NT) is a substrate binding site. FMN is bound by residues Gly-271, Gly-300, and 321-322 (YT).

It belongs to the dihydroorotate dehydrogenase family. Type 2 subfamily. In terms of assembly, monomer. Requires FMN as cofactor.

It is found in the cell membrane. The enzyme catalyses (S)-dihydroorotate + a quinone = orotate + a quinol. It participates in pyrimidine metabolism; UMP biosynthesis via de novo pathway; orotate from (S)-dihydroorotate (quinone route): step 1/1. Its function is as follows. Catalyzes the conversion of dihydroorotate to orotate with quinone as electron acceptor. This is Dihydroorotate dehydrogenase (quinone) from Burkholderia lata (strain ATCC 17760 / DSM 23089 / LMG 22485 / NCIMB 9086 / R18194 / 383).